Reading from the N-terminus, the 149-residue chain is Large ribosomal subunit protein bL9 (149 aa).

The protein belongs to the bacterial ribosomal protein bL9 family.

Binds to the 23S rRNA. The polypeptide is Large ribosomal subunit protein bL9 (Clostridioides difficile (strain 630) (Peptoclostridium difficile)).